Reading from the N-terminus, the 564-residue chain is Keratin, type II cytoskeletal 6A (564 aa).

A compositionally biased stretch (low complexity) spans 1–11; sequence MASTSTTIRSH. The segment at 1–23 is disordered; sequence MASTSTTIRSHSSSRRGFSANSA. Alanine 2 is subject to N-acetylalanine. The tract at residues 2-162 is head; sequence ASTSTTIRSH…DPTIQRVRAE (161 aa). The coil 1A stretch occupies residues 163–198; it reads EREQIKTLNNKFASFIDKVRFLEQQNKVLETKWTLL. The IF rod domain occupies 163-476; the sequence is EREQIKTLNN…KLLEGEECRL (314 aa). The interval 199–217 is linker 1; sequence QEQGTKTVRQNLEPLFEQY. A coil 1B region spans residues 218–309; sequence INNLRRQLDS…ALYDAELSQM (92 aa). The tract at residues 310-333 is linker 12; that stretch reads QTHISDTSVVLSMDNNRNLDLDSI. A coil 2 region spans residues 334-472; it reads IAEVKAQYEE…ATYRKLLEGE (139 aa). Positions 473–564 are tail; that stretch reads ECRLNGEGVG…SSSSRKSYKH (92 aa).

Belongs to the intermediate filament family. Heterodimer of a type I and a type II keratin. KRT6 isomers associate with KRT16 and/or KRT17. Interacts with TCHP. As to expression, expressed in the corneal epithelium (at protein level).

Epidermis-specific type I keratin involved in wound healing. Involved in the activation of follicular keratinocytes after wounding, while it does not play a major role in keratinocyte proliferation or migration. Participates in the regulation of epithelial migration by inhibiting the activity of SRC during wound repair. This is Keratin, type II cytoskeletal 6A (KRT6A) from Homo sapiens (Human).